The sequence spans 311 residues: Putative dihydroorotate dehydrogenase A (fumarate) (311 aa).

Substrate-binding positions include lysine 45, 69–73 (NSMGL), and asparagine 128. 45 to 46 (KT) serves as a coordination point for FMN. Position 128 (asparagine 128) interacts with FMN. The active-site Nucleophile is cysteine 131. FMN contacts are provided by lysine 165 and valine 193. Residue 194-195 (NS) participates in substrate binding. Residues glycine 220, 248 to 249 (GG), and 270 to 271 (GT) each bind FMN.

The protein belongs to the dihydroorotate dehydrogenase family. Type 1 subfamily. As to quaternary structure, homodimer. Requires FMN as cofactor.

It is found in the cytoplasm. It carries out the reaction (S)-dihydroorotate + fumarate = orotate + succinate. Its pathway is pyrimidine metabolism; UMP biosynthesis via de novo pathway. In terms of biological role, catalyzes the conversion of dihydroorotate to orotate with fumarate as the electron acceptor. In Streptococcus pyogenes serotype M18 (strain MGAS8232), this protein is Putative dihydroorotate dehydrogenase A (fumarate) (pyrD).